The chain runs to 600 residues: Elongation factor 4 (600 aa).

Residues 5 to 187 (KYIRNFSIIA…AIVNKLPPPK (183 aa)) form the tr-type G domain. Residues 17 to 22 (DHGKST) and 134 to 137 (NKID) contribute to the GTP site.

This sequence belongs to the TRAFAC class translation factor GTPase superfamily. Classic translation factor GTPase family. LepA subfamily.

The protein localises to the cell inner membrane. It carries out the reaction GTP + H2O = GDP + phosphate + H(+). Functionally, required for accurate and efficient protein synthesis under certain stress conditions. May act as a fidelity factor of the translation reaction, by catalyzing a one-codon backward translocation of tRNAs on improperly translocated ribosomes. Back-translocation proceeds from a post-translocation (POST) complex to a pre-translocation (PRE) complex, thus giving elongation factor G a second chance to translocate the tRNAs correctly. Binds to ribosomes in a GTP-dependent manner. The protein is Elongation factor 4 of Rickettsia canadensis (strain McKiel).